The following is a 38-amino-acid chain: Putative defensin-like protein 105 (38 aa).

Intrachain disulfides connect C5–C27, C13–C33, and C17–C34.

It belongs to the DEFL family.

In Arabidopsis thaliana (Mouse-ear cress), this protein is Putative defensin-like protein 105.